A 650-amino-acid polypeptide reads, in one-letter code: Secretin OutD (650 aa).

A signal peptide spans Met1–Ser18. The tract at residues Glu20–Gly115 is N0. The interval Glu117 to Gly181 is N1. Positions Asp182–Ala255 are N2. The N3 stretch occupies residues Gly258–Asp330. The interval Gln335–Asp585 is secretin. Residues Ser587–Lys650 form a s domain region.

The protein belongs to the bacterial secretin family. GSP D subfamily. In terms of assembly, forms a cylindrical channel with 15 subunits.

Its subcellular location is the cell outer membrane. In terms of biological role, involved in a type II secretion system (T2SS, formerly general secretion pathway, GSP) for the export of proteins. Required for the translocation of the multiple pectic enzymes. This subunit forms the outer membrane channel. This is Secretin OutD (outD) from Pectobacterium carotovorum subsp. carotovorum (Erwinia carotovora subsp. carotovora).